We begin with the raw amino-acid sequence, 164 residues long: Putative lung carcinoma-associated protein 10 (164 aa).

The segment at 1–164 (MSSCPVHDCP…TQKPQTTVGQ (164 aa)) is disordered. A compositionally biased stretch (low complexity) spans 23 to 40 (GSRGALRLRGGAPGSAAG). The segment covering 152 to 164 (MQKTQKPQTTVGQ) has biased composition (polar residues).

The polypeptide is Putative lung carcinoma-associated protein 10 (LCA10) (Homo sapiens (Human)).